The sequence spans 439 residues: MQVSSYLRRALRRPPFPAGDANHRRLSSAPAPKPEAPAEAMPPPPMPTRPWGEALAAAQRAFCLPLAGRVLAAAGTGNAAVSAPAVHVSLALAAGGARGATRRQVLQALGCGGGGRGGAADAANVASRVVKRVLRDRSTSGGPRLAFAGGVWADASRSLSPEFVGLAGNVYGSAAKKADFKNKPEDAPDQINSWVKDSTKGTVTTLLPAGTIDQNTGLVLGSALYFRGRWLDRDDLRRTTEQKFYCLDGTSVEVPFVEYDRTRLFAVHDNFKVIKLPYKQGKNERKFSMYIFLPDDHDGLFELTQKIFSEPMFLEQHLPTEKCHVGISVPNFKISFQIDVKDFLKDMGLELPFLREAEFSDMIKEDDSSGPLFLSDVLHKAVLEVDQKGIEETSVSMGLGKPLPAQHFKADHPFFFMIREEVSGTVIFMGHVLDPSSRT.

Residues 12–44 (RRPPFPAGDANHRRLSSAPAPKPEAPAEAMPPP) form a disordered region. The span at 31 to 44 (APKPEAPAEAMPPP) shows a compositional bias: pro residues. An RCL region spans residues 389 to 413 (GIEETSVSMGLGKPLPAQHFKADHP).

It belongs to the serpin family.

The sequence is that of Probable non-inhibitory serpin-Z9 from Oryza sativa subsp. japonica (Rice).